We begin with the raw amino-acid sequence, 157 residues long: Protein-export protein SecB (157 aa).

The protein belongs to the SecB family. As to quaternary structure, homotetramer, a dimer of dimers. One homotetramer interacts with 1 SecA dimer.

The protein localises to the cytoplasm. In terms of biological role, one of the proteins required for the normal export of preproteins out of the cell cytoplasm. It is a molecular chaperone that binds to a subset of precursor proteins, maintaining them in a translocation-competent state. It also specifically binds to its receptor SecA. In Shewanella frigidimarina (strain NCIMB 400), this protein is Protein-export protein SecB.